A 22-amino-acid chain; its full sequence is Unknown endosperm protein L (22 aa).

The span at 1-11 (MRHSNKIRDEE) shows a compositional bias: basic and acidic residues. The segment at 1-22 (MRHSNKIRDEEMVNNTRLNXXA) is disordered. The segment covering 13–22 (VNNTRLNXXA) has biased composition (polar residues).

Post-translationally, the N-terminus is blocked.

The chain is Unknown endosperm protein L from Hordeum vulgare (Barley).